We begin with the raw amino-acid sequence, 737 residues long: Protein penguin (737 aa).

A disordered region spans residues 1 to 128 (MVSSEPKGPA…EKKDLKLKRK (128 aa)). Composition is skewed to basic and acidic residues over residues 76–89 (KKFDKSGATGDKRL) and 107–122 (EGEKQDWNKFKKEKKD). Residues 139–490 (EANQIHEKLR…EILEQIEAPI (352 aa)) enclose the PUM-HD domain. Pumilio repeat units follow at residues 167–202 (NVGDTISKVVKAHDTARVIQSMLKYASPALRAEISE), 203–238 (KLLPFTVEMCQSKYAQFCVQRMLKYGAPATKAKLVD), 239–274 (SLYGHIVRLAGHSIGSGLLDSMYQSATPNQRIYMRQ), 388–425 (NIKEHLLKIANHEHGHVFLISLLNALDDTKATKKAIYD), and 426–462 (HLHGDLKALMSSPYGRRVIQWLVAPGDTTCFHPEFIR). Positions 577–638 (VESSSDDEDE…EEEPAAPLVS (62 aa)) are disordered. Acidic residues predominate over residues 580-600 (SSDDEDEDEDEDEESDDEGDE). Residues 601–615 (KEQKEAAADDAEPKV) are compositionally biased toward basic and acidic residues. Residues 616 to 626 (KKAKKEPKKPK) show a composition bias toward basic residues.

The chain is Protein penguin from Drosophila melanogaster (Fruit fly).